The sequence spans 187 residues: GTP cyclohydrolase 1 (187 aa).

Zn(2+) contacts are provided by Cys76, His79, and Cys148.

This sequence belongs to the GTP cyclohydrolase I family. As to quaternary structure, toroid-shaped homodecamer, composed of two pentamers of five dimers.

It carries out the reaction GTP + H2O = 7,8-dihydroneopterin 3'-triphosphate + formate + H(+). It functions in the pathway cofactor biosynthesis; 7,8-dihydroneopterin triphosphate biosynthesis; 7,8-dihydroneopterin triphosphate from GTP: step 1/1. This is GTP cyclohydrolase 1 from Streptococcus agalactiae serotype III (strain NEM316).